A 316-amino-acid chain; its full sequence is tRNA dimethylallyltransferase (316 aa).

Residue 17–24 participates in ATP binding; it reads GPTASGKT. 19–24 serves as a coordination point for substrate; it reads TASGKT. 4 interaction with substrate tRNA regions span residues 42–45, 166–170, 247–252, and 280–287; these read DSAL, QRLSR, RCVGYR, and KRQITWLR.

It belongs to the IPP transferase family. In terms of assembly, monomer. Mg(2+) serves as cofactor.

The enzyme catalyses adenosine(37) in tRNA + dimethylallyl diphosphate = N(6)-dimethylallyladenosine(37) in tRNA + diphosphate. Its function is as follows. Catalyzes the transfer of a dimethylallyl group onto the adenine at position 37 in tRNAs that read codons beginning with uridine, leading to the formation of N6-(dimethylallyl)adenosine (i(6)A). In Escherichia fergusonii (strain ATCC 35469 / DSM 13698 / CCUG 18766 / IAM 14443 / JCM 21226 / LMG 7866 / NBRC 102419 / NCTC 12128 / CDC 0568-73), this protein is tRNA dimethylallyltransferase.